The following is a 267-amino-acid chain: 5'-nucleotidase SurE (267 aa).

Positions 9, 10, 40, and 97 each coordinate a divalent metal cation.

This sequence belongs to the SurE nucleotidase family. The cofactor is a divalent metal cation.

It is found in the cytoplasm. It carries out the reaction a ribonucleoside 5'-phosphate + H2O = a ribonucleoside + phosphate. Nucleotidase that shows phosphatase activity on nucleoside 5'-monophosphates. This chain is 5'-nucleotidase SurE, found in Helicobacter pylori (strain J99 / ATCC 700824) (Campylobacter pylori J99).